The primary structure comprises 389 residues: Na(+)/H(+) antiporter NhaA 1 (389 aa).

The next 11 membrane-spanning stretches (helical) occupy residues 12 to 32 (VLNEAFGGVLLIVCTLLALLV), 62 to 82 (FLLWINDGLISIFFFAIGLEL), 97 to 117 (IVLPFMAALGGILIPAMLFAL), 128 to 148 (GWAIPTATDTAFALAILMMCG), 157 to 177 (IFLLSLAIFDDVGAILIIAIF), 184 to 204 (IVAFVVAGIAILAMLVLNILG), 220 to 240 (ISVLKSGVHATLAGIITAFFI), 260 to 280 (FWLAFVILPLFAFANAGVNLS), 282 to 302 (IDIGAIFSGVSVGIFLGLFVG), 331 to 351 (LYGVCILTGIGFTMSLFIDGL), and 365 to 385 (LAILIASFCSGIWGFIYLKFF).

This sequence belongs to the NhaA Na(+)/H(+) (TC 2.A.33) antiporter family.

It is found in the cell inner membrane. It catalyses the reaction Na(+)(in) + 2 H(+)(out) = Na(+)(out) + 2 H(+)(in). In terms of biological role, na(+)/H(+) antiporter that extrudes sodium in exchange for external protons. In Campylobacter jejuni subsp. jejuni serotype O:6 (strain 81116 / NCTC 11828), this protein is Na(+)/H(+) antiporter NhaA 1.